The sequence spans 1288 residues: Symplekin (1288 aa).

The segment at Met-1 to Asn-124 is interaction with HSF1. Residue Ser-13 is modified to Phosphoserine. HEAT repeat units follow at residues Thr-31–Asn-64, Pro-67–Lys-101, Ile-104–Lys-146, Leu-153–Val-192, and Val-227–Gln-266. The disordered stretch occupies residues Ile-335 to Gln-392. Positions Ser-345–Met-360 match the Nuclear localization signal motif. Residues Pro-349 to Leu-362 show a composition bias toward basic and acidic residues. Residue Lys-361 forms a Glycyl lysine isopeptide (Lys-Gly) (interchain with G-Cter in SUMO1); alternate linkage. Lys-361 is covalently cross-linked (Glycyl lysine isopeptide (Lys-Gly) (interchain with G-Cter in SUMO2); alternate). Over residues Ser-380–Gln-392 the composition is skewed to polar residues. Residue Lys-483 forms a Glycyl lysine isopeptide (Lys-Gly) (interchain with G-Cter in SUMO2) linkage. A Phosphoserine modification is found at Ser-494. Disordered stretches follow at residues Pro-1130–Asp-1151 and Leu-1163–Ser-1288. A compositionally biased stretch (pro residues) spans Ala-1131–Pro-1149. Over residues Leu-1163–Gln-1173 the composition is skewed to basic and acidic residues. 2 positions are modified to phosphoserine: Ser-1238 and Ser-1239. Residue Lys-1256 forms a Glycyl lysine isopeptide (Lys-Gly) (interchain with G-Cter in SUMO1) linkage. At Ser-1260 the chain carries Phosphoserine. Residues Ala-1267–Ser-1288 are compositionally biased toward basic and acidic residues. The residue at position 1274 (Thr-1274) is a Phosphothreonine. Residue Ser-1276 is modified to Phosphoserine.

The protein belongs to the Symplekin family. Found in a heat-sensitive complex at least composed of several cleavage and polyadenylation specific and cleavage stimulation factors. Interacts with CPSF2, CPSF3 and CSTF2. Interacts (via N-terminus) with HSF1; this interaction is direct and occurs upon heat shock. Interacts with SSU72.

The protein localises to the cytoplasm. The protein resides in the cytoskeleton. It is found in the cell junction. It localises to the tight junction. Its subcellular location is the cell membrane. The protein localises to the nucleus. The protein resides in the nucleoplasm. Scaffold protein that functions as a component of a multimolecular complex involved in histone mRNA 3'-end processing. Specific component of the tight junction (TJ) plaque, but might not be an exclusively junctional component. May have a house-keeping rule. Is involved in pre-mRNA polyadenylation. Enhances SSU72 phosphatase activity. The polypeptide is Symplekin (Sympk) (Mus musculus (Mouse)).